Here is a 299-residue protein sequence, read N- to C-terminus: UDP-N-acetylenolpyruvoylglucosamine reductase (299 aa).

One can recognise an FAD-binding PCMH-type domain in the interval 28–193 (KVGGPADILA…LSAKFELQAG (166 aa)). Arg-172 is a catalytic residue. Catalysis depends on Ser-222, which acts as the Proton donor. Residue Glu-292 is part of the active site.

Belongs to the MurB family. FAD is required as a cofactor.

It is found in the cytoplasm. It catalyses the reaction UDP-N-acetyl-alpha-D-muramate + NADP(+) = UDP-N-acetyl-3-O-(1-carboxyvinyl)-alpha-D-glucosamine + NADPH + H(+). Its pathway is cell wall biogenesis; peptidoglycan biosynthesis. In terms of biological role, cell wall formation. The sequence is that of UDP-N-acetylenolpyruvoylglucosamine reductase from Lactococcus lactis subsp. cremoris (strain SK11).